A 319-amino-acid chain; its full sequence is Acetyl-coenzyme A carboxylase carboxyl transferase subunit alpha (319 aa).

Residues 35 to 296 (DLEKEIKQLE…KQRLLEQLKE (262 aa)) form the CoA carboxyltransferase C-terminal domain.

Belongs to the AccA family. As to quaternary structure, acetyl-CoA carboxylase is a heterohexamer composed of biotin carboxyl carrier protein (AccB), biotin carboxylase (AccC) and two subunits each of ACCase subunit alpha (AccA) and ACCase subunit beta (AccD).

It localises to the cytoplasm. It catalyses the reaction N(6)-carboxybiotinyl-L-lysyl-[protein] + acetyl-CoA = N(6)-biotinyl-L-lysyl-[protein] + malonyl-CoA. It functions in the pathway lipid metabolism; malonyl-CoA biosynthesis; malonyl-CoA from acetyl-CoA: step 1/1. Component of the acetyl coenzyme A carboxylase (ACC) complex. First, biotin carboxylase catalyzes the carboxylation of biotin on its carrier protein (BCCP) and then the CO(2) group is transferred by the carboxyltransferase to acetyl-CoA to form malonyl-CoA. The chain is Acetyl-coenzyme A carboxylase carboxyl transferase subunit alpha from Aliivibrio fischeri (strain ATCC 700601 / ES114) (Vibrio fischeri).